The sequence spans 266 residues: Carboxy-S-adenosyl-L-methionine synthase (266 aa).

The tract at residues 1–24 is disordered; sequence MPKRETQSLHDTQQQPGPTAPQRD. S-adenosyl-L-methionine-binding positions include tyrosine 58, 83 to 85, 108 to 109, 136 to 137, asparagine 151, and arginine 218; these read GCS, DN, and DI.

This sequence belongs to the class I-like SAM-binding methyltransferase superfamily. Cx-SAM synthase family. In terms of assembly, homodimer.

The enzyme catalyses prephenate + S-adenosyl-L-methionine = carboxy-S-adenosyl-L-methionine + 3-phenylpyruvate + H2O. Functionally, catalyzes the conversion of S-adenosyl-L-methionine (SAM) to carboxy-S-adenosyl-L-methionine (Cx-SAM). The chain is Carboxy-S-adenosyl-L-methionine synthase from Yersinia enterocolitica serotype O:8 / biotype 1B (strain NCTC 13174 / 8081).